The primary structure comprises 212 residues: Noggin-2 (212 aa).

The signal sequence occupies residues 1–23 (MGSITRALPLLLLLLLCAHGTAS). Residues 37–56 (LPVPDLIENPDPEHDPREQD) are disordered. Residues 47–56 (DPEHDPREQD) are compositionally biased toward basic and acidic residues. N84 is a glycosylation site (N-linked (GlcNAc...) asparagine).

It belongs to the noggin family. As to quaternary structure, homodimer; disulfide-linked.

It is found in the secreted. Inhibitor of bone morphogenetic proteins (BMP) signaling. This is Noggin-2 (nog2) from Danio rerio (Zebrafish).